A 371-amino-acid polypeptide reads, in one-letter code: 3-dehydroquinate synthase (371 aa).

NAD(+) contacts are provided by residues 72 to 77, 106 to 110, 130 to 131, Lys143, Lys152, and 170 to 173; these read DGEEHK, GVVGD, TT, and TLKT. Glu185, His248, and His265 together coordinate Zn(2+).

It belongs to the sugar phosphate cyclases superfamily. Dehydroquinate synthase family. Requires Co(2+) as cofactor. Zn(2+) is required as a cofactor. It depends on NAD(+) as a cofactor.

The protein localises to the cytoplasm. It catalyses the reaction 7-phospho-2-dehydro-3-deoxy-D-arabino-heptonate = 3-dehydroquinate + phosphate. Its pathway is metabolic intermediate biosynthesis; chorismate biosynthesis; chorismate from D-erythrose 4-phosphate and phosphoenolpyruvate: step 2/7. Functionally, catalyzes the conversion of 3-deoxy-D-arabino-heptulosonate 7-phosphate (DAHP) to dehydroquinate (DHQ). This Pelotomaculum thermopropionicum (strain DSM 13744 / JCM 10971 / SI) protein is 3-dehydroquinate synthase.